We begin with the raw amino-acid sequence, 275 residues long: NADPH-dependent 7-cyano-7-deazaguanine reductase (275 aa).

81–83 (IES) provides a ligand contact to substrate. NADPH is bound at residue 83 to 84 (SK). Cys181 (thioimide intermediate) is an active-site residue. Asp188 acts as the Proton donor in catalysis. A substrate-binding site is contributed by 220 to 221 (HE). 249-250 (RG) provides a ligand contact to NADPH.

Belongs to the GTP cyclohydrolase I family. QueF type 2 subfamily. Homodimer.

The protein resides in the cytoplasm. The enzyme catalyses 7-aminomethyl-7-carbaguanine + 2 NADP(+) = 7-cyano-7-deazaguanine + 2 NADPH + 3 H(+). It functions in the pathway tRNA modification; tRNA-queuosine biosynthesis. Its function is as follows. Catalyzes the NADPH-dependent reduction of 7-cyano-7-deazaguanine (preQ0) to 7-aminomethyl-7-deazaguanine (preQ1). The chain is NADPH-dependent 7-cyano-7-deazaguanine reductase from Xylella fastidiosa (strain 9a5c).